Reading from the N-terminus, the 551-residue chain is Protein PLASTID TRANSCRIPTIONALLY ACTIVE 12, chloroplastic (551 aa).

A chloroplast-targeting transit peptide spans 1–47 (MASCSRTWLLPGMAPQATAQTVPRPLQSLKVFAGLPHRRRVLFSGVS). Disordered regions lie at residues 76–161 (SSYF…EGES) and 463–529 (HSYN…DQLS). Over residues 109 to 119 (RVRAARAPAPV) the composition is skewed to low complexity. 2 stretches are compositionally biased toward acidic residues: residues 467–476 (EDSDDDEEDA) and 485–498 (SLED…DAED). The segment covering 505–516 (RNWSVLKTTGQA) has biased composition (polar residues). The span at 518 to 529 (NPKEKSKKDQLS) shows a compositional bias: basic and acidic residues.

As to quaternary structure, component of the plastid-encoded plastid RNA polymerase (PEP) complex.

It is found in the plastid. The protein resides in the chloroplast. Its function is as follows. Required for the activity of the plastid-encoded RNA polymerase (PEP) and full expression of genes transcribed by PEP. Required for the proper build-up and formation of the PEP-complex. Binds single-stranded (ss) DNA and RNA, but not double-stranded (ds) DNA. This Oryza sativa subsp. japonica (Rice) protein is Protein PLASTID TRANSCRIPTIONALLY ACTIVE 12, chloroplastic.